Here is a 147-residue protein sequence, read N- to C-terminus: Protein SprT-like (147 aa).

The 134-residue stretch at 9–142 (AKVKEISLTY…CGKCRGKLIL (134 aa)) folds into the SprT-like domain. Histidine 65 is a binding site for Zn(2+). Residue glutamate 66 is part of the active site. Histidine 69 serves as a coordination point for Zn(2+).

It belongs to the SprT family. It depends on Zn(2+) as a cofactor.

It is found in the cytoplasm. This chain is Protein SprT-like (yciD), found in Lactococcus lactis subsp. lactis (strain IL1403) (Streptococcus lactis).